The primary structure comprises 557 residues: Ras-specific guanine nucleotide-releasing factor RalGPS2 (557 aa).

In terms of domain architecture, Ras-GEF spans 49-287 (TPEEYAGQIT…YKLSLKIEPG (239 aa)). Residues 283 to 314 (KIEPGTSTPRSAASREDLVGPEVGASPQSGRK) form a disordered region. Residues serine 293, serine 296, serine 308, and serine 311 each carry the phosphoserine modification. Phosphothreonine is present on threonine 326. The short motif at 327–330 (PPSP) is the PXXP element. Phosphoserine is present on residues serine 329 and serine 343. The residue at position 361 (threonine 361) is a Phosphothreonine. A disordered region spans residues 368 to 409 (RHLLDDSVMEPHAPSRGQAESSTLSSGISIGSSDGSELSEET). Serine 374 carries the phosphoserine modification. The span at 387–403 (ESSTLSSGISIGSSDGS) shows a compositional bias: low complexity. A PH domain is found at 431–543 (AVTIQGVLRR…WFKHLSAACQ (113 aa)). The required for stimulation of nucleotide exchange by RALA stretch occupies residues 433 to 557 (TIQGVLRRKT…QVPTNLMTFE (125 aa)).

In terms of assembly, interacts with the SH3 domains of GRB2 and PLCG1. Interacts with RALA.

Its subcellular location is the cytoplasm. It localises to the cell membrane. Guanine nucleotide exchange factor for the small GTPase RALA. May be involved in cytoskeletal organization. May also be involved in the stimulation of transcription in a Ras-independent fashion. The polypeptide is Ras-specific guanine nucleotide-releasing factor RalGPS2 (RALGPS2) (Macaca fascicularis (Crab-eating macaque)).